We begin with the raw amino-acid sequence, 86 residues long: Large ribosomal subunit protein uL23 (86 aa).

It belongs to the universal ribosomal protein uL23 family. In terms of assembly, part of the 50S ribosomal subunit. Contacts protein L29.

Binds to 23S rRNA. One of the proteins that surrounds the polypeptide exit tunnel on the outside of the ribosome. This chain is Large ribosomal subunit protein uL23, found in Thermococcus kodakarensis (strain ATCC BAA-918 / JCM 12380 / KOD1) (Pyrococcus kodakaraensis (strain KOD1)).